The sequence spans 576 residues: Protein HYPER-SENSITIVITY-RELATED 4 (576 aa).

A helical transmembrane segment spans residues 55-75 (LATAKTVLTTAASVAATAMLA). 306–313 (GPPGTGKS) is a binding site for ATP. A disordered region spans residues 508-532 (DKAKTEKQELENKKKTKEGTDSVVK).

The protein belongs to the AAA ATPase family. BCS1 subfamily. Binds to the Yariv phenylglycoside (beta-D-Glc)(3). Mg(2+) is required as a cofactor.

Its subcellular location is the membrane. It catalyses the reaction ATP + H2O = ADP + phosphate + H(+). The chain is Protein HYPER-SENSITIVITY-RELATED 4 from Arabidopsis thaliana (Mouse-ear cress).